Here is a 156-residue protein sequence, read N- to C-terminus: ATP synthase subunit b (156 aa).

The chain crosses the membrane as a helical span at residues 5–25 (LTLIGQAIAFAFFVAFCMKFV).

It belongs to the ATPase B chain family. In terms of assembly, F-type ATPases have 2 components, F(1) - the catalytic core - and F(0) - the membrane proton channel. F(1) has five subunits: alpha(3), beta(3), gamma(1), delta(1), epsilon(1). F(0) has three main subunits: a(1), b(2) and c(10-14). The alpha and beta chains form an alternating ring which encloses part of the gamma chain. F(1) is attached to F(0) by a central stalk formed by the gamma and epsilon chains, while a peripheral stalk is formed by the delta and b chains.

It is found in the cell inner membrane. F(1)F(0) ATP synthase produces ATP from ADP in the presence of a proton or sodium gradient. F-type ATPases consist of two structural domains, F(1) containing the extramembraneous catalytic core and F(0) containing the membrane proton channel, linked together by a central stalk and a peripheral stalk. During catalysis, ATP synthesis in the catalytic domain of F(1) is coupled via a rotary mechanism of the central stalk subunits to proton translocation. In terms of biological role, component of the F(0) channel, it forms part of the peripheral stalk, linking F(1) to F(0). This is ATP synthase subunit b from Acinetobacter baumannii (strain SDF).